A 657-amino-acid chain; its full sequence is MLNQNNQELFKPSKEFSRNARIKNLCEYYDLCDEAKEDFEGFWKRQALEKIEWFSPFSRVLNEDKAPFYKWFEGGTLNVSYQCLDRHMKTRRNKAALIFEGEMGDYEVYTYRRLLHETCKAANLLKKFGVKKGDRVVIYMPMIPETAIVMLACARIGAIHSVVFGGFSPEALRDRIIDAGAKLVVTADGAFRRGKPYMLKPAVDKALSEGCESVEKVLIVIRNNEPIEYIKGRDYVYNELVKNESYKCEPEIMDSEDLLFLLYTSGSTGKPKGVMHASAGYILWAQMTMEWVFDIKDYDNYWCSADVGWITGHTYVVYGPLACGATTIMHEGTPTYPNSGRWWRMIEEYQISKFYTSPTAIRMLHADAPDEPRKYDLSTLEVLGTVGEPINPSAWKWFYDEIGGTKSPIVDTWWQTETGGHMITPLPGATPLKPGCATLPLPGIFAEVIDEEGNKKDEGEDGLLCITKPWPSMIRGIWGNDERYIESYFSQAKKDGKAVYFSGDGAFYDKNGYITITGRTDDVVNVAGHRIGTAEIESAIAKHPSVAESAVVSILDAIKGESLFAFVVLSPASSCDLGGAIETLKELNDILRVEIGPIAKIEKILYTPGLPKTRSGKIMRRILRTIARGEEIKQDISTLEDSGVVETIVKLAKAEFE.

CoA contacts are provided by residues 192–195 and Thr311; that span reads RRGK. Residues 387 to 389, 411 to 416, Asp504, Arg519, and Arg530 contribute to the ATP site; these read GEP and DTWWQT. Residues His543 and Val546 each contribute to the Mg(2+) site. Arg592 provides a ligand contact to CoA. At Lys617 the chain carries N6-acetyllysine.

This sequence belongs to the ATP-dependent AMP-binding enzyme family. The cofactor is Mg(2+). In terms of processing, acetylated. Deacetylation by the SIR2-homolog deacetylase activates the enzyme.

The catalysed reaction is acetate + ATP + CoA = acetyl-CoA + AMP + diphosphate. Its function is as follows. Catalyzes the conversion of acetate into acetyl-CoA (AcCoA), an essential intermediate at the junction of anabolic and catabolic pathways. AcsA undergoes a two-step reaction. In the first half reaction, AcsA combines acetate with ATP to form acetyl-adenylate (AcAMP) intermediate. In the second half reaction, it can then transfer the acetyl group from AcAMP to the sulfhydryl group of CoA, forming the product AcCoA. The polypeptide is Acetyl-coenzyme A synthetase (Campylobacter jejuni subsp. jejuni serotype O:6 (strain 81116 / NCTC 11828)).